Consider the following 642-residue polypeptide: tRNA uridine 5-carboxymethylaminomethyl modification enzyme MnmG (642 aa).

Residues 10–15 (GAGHAG), valine 122, and serine 177 contribute to the FAD site. 269-283 (SARYCPSLEDKVMRF) provides a ligand contact to NAD(+). Residue glutamine 366 participates in FAD binding.

This sequence belongs to the MnmG family. As to quaternary structure, homodimer. Heterotetramer of two MnmE and two MnmG subunits. The cofactor is FAD.

Its subcellular location is the cytoplasm. Functionally, NAD-binding protein involved in the addition of a carboxymethylaminomethyl (cmnm) group at the wobble position (U34) of certain tRNAs, forming tRNA-cmnm(5)s(2)U34. This is tRNA uridine 5-carboxymethylaminomethyl modification enzyme MnmG from Syntrophobacter fumaroxidans (strain DSM 10017 / MPOB).